The chain runs to 126 residues: uncharacterized protein (126 aa).

Residues 20-118 (CPSREVLKHV…WIELNLPEVL (99 aa)) form the HTH hxlR-type domain.

This is an uncharacterized protein from Escherichia coli (strain K12).